The primary structure comprises 67 residues: Conotoxin TsMMSK-011 (67 aa).

Residues 1–22 form the signal peptide; sequence MMSKLGVLLTICLLLFPLTVLP. The propeptide occupies 23-50; sequence MDGDQPADLPALRTQDIATDQSPWFDPV. 3 disulfide bridges follow: cysteine 53–cysteine 65, cysteine 54–cysteine 61, and cysteine 58–cysteine 64. A 4-hydroxyproline modification is found at proline 63.

The protein belongs to the conotoxin M superfamily. In terms of tissue distribution, expressed by the venom duct.

It is found in the secreted. The sequence is that of Conotoxin TsMMSK-011 from Conus tessulatus (Tessellate cone).